A 420-amino-acid polypeptide reads, in one-letter code: MTLLALGINHNTASVDLREKVAFSPDKLKEALQQLESHPEVTSSIIVSTCNRTEVYCDVTHSGPGVMIDWLAKFHRLSAEEILPSLYFHEEQAAARHLMRVACGLDSLVLGEPQILGQVKQSYYSSQEYDAIHGTLEKLFHKTFTVAKRVRTETDIGGNAVSVAYAACTLAKQIFESLSDTTVLLVGAGETIELVSRHLVEQGCNKLIVANRTKERAANLAEEFGAEVIGLPEIPEHLHRADIVISSTASPLPIVGKGMVEKAIKARRHQPMLFVDIAVPRDVEAEVGDLNDVYLYTVDDLHSIIEKNREQRKVAAIQAEAIISEESAAFMSWLRSLEAVDSIRQYRCFADDIKNDMLSRSLQAIANGVAPEKVLVELSNKLTNKLIHAPTRAMQQAAHNGEPEKLSVIRETLGLDSIKD.

Substrate-binding positions include 49 to 52 (TCNR), S107, 112 to 114 (EPQ), and Q118. The active-site Nucleophile is the C50. Residue 187-192 (GAGETI) coordinates NADP(+).

The protein belongs to the glutamyl-tRNA reductase family. In terms of assembly, homodimer.

It carries out the reaction (S)-4-amino-5-oxopentanoate + tRNA(Glu) + NADP(+) = L-glutamyl-tRNA(Glu) + NADPH + H(+). The protein operates within porphyrin-containing compound metabolism; protoporphyrin-IX biosynthesis; 5-aminolevulinate from L-glutamyl-tRNA(Glu): step 1/2. Functionally, catalyzes the NADPH-dependent reduction of glutamyl-tRNA(Glu) to glutamate 1-semialdehyde (GSA). The protein is Glutamyl-tRNA reductase of Photobacterium profundum (strain SS9).